A 63-amino-acid polypeptide reads, in one-letter code: Large ribosomal subunit protein bL35 (63 aa).

It belongs to the bacterial ribosomal protein bL35 family.

In Finegoldia magna (strain ATCC 29328 / DSM 20472 / WAL 2508) (Peptostreptococcus magnus), this protein is Large ribosomal subunit protein bL35.